The primary structure comprises 132 residues: UPF0212 protein PYRAB08340 (132 aa).

The protein belongs to the UPF0212 family.

The chain is UPF0212 protein PYRAB08340 from Pyrococcus abyssi (strain GE5 / Orsay).